The sequence spans 188 residues: Protein TIFY 9 (188 aa).

Residues 20–41 form a disordered region; sequence DADDRHAKSGGSSASSSSSIRG. Over residues 28 to 38 the composition is skewed to low complexity; sequence SGGSSASSSSS. Residues 80-114 enclose the Tify domain; sequence AAAAAAPMTLFYNGSVAVFDVSHDKAEAIMRMATE. The short motif at 135 to 160 is the Jas element; the sequence is PLTRTKSLQRFLSKRKERLTSLGPYQ. A disordered region spans residues 156-188; the sequence is LGPYQVGGPAAVGATTSTTTKSFLAKEEEHTAS. Positions 179-188 are enriched in basic and acidic residues; the sequence is LAKEEEHTAS.

It belongs to the TIFY/JAZ family. Ubiquitinated. Targeted for degradation by the SCF(COI1) E3 ubiquitin ligase-proteasome pathway during jasmonate signaling.

Its function is as follows. Repressor of jasmonate responses. This Oryza sativa subsp. indica (Rice) protein is Protein TIFY 9.